Consider the following 152-residue polypeptide: Deoxyuridine 5'-triphosphate nucleotidohydrolase (152 aa).

Substrate contacts are provided by residues 71–73 (RSG), Asn-84, 88–90 (LID), and Met-98.

The protein belongs to the dUTPase family. Requires Mg(2+) as cofactor.

The enzyme catalyses dUTP + H2O = dUMP + diphosphate + H(+). It participates in pyrimidine metabolism; dUMP biosynthesis; dUMP from dCTP (dUTP route): step 2/2. Its function is as follows. This enzyme is involved in nucleotide metabolism: it produces dUMP, the immediate precursor of thymidine nucleotides and it decreases the intracellular concentration of dUTP so that uracil cannot be incorporated into DNA. This Klebsiella pneumoniae (strain 342) protein is Deoxyuridine 5'-triphosphate nucleotidohydrolase.